The following is a 313-amino-acid chain: Protoheme IX farnesyltransferase (313 aa).

Transmembrane regions (helical) follow at residues 34–54, 56–76, 105–125, 128–148, 152–172, 173–193, 237–257, and 291–311; these read VIEL…RGTV, PLLI…ANTL, HALI…WSTT, LSAH…TLLL, TSQN…IGWS, AVTG…FFWT, VLAT…VAIL, and YLAV…PTLL.

Belongs to the UbiA prenyltransferase family. Protoheme IX farnesyltransferase subfamily.

It is found in the cell membrane. It carries out the reaction heme b + (2E,6E)-farnesyl diphosphate + H2O = Fe(II)-heme o + diphosphate. It participates in porphyrin-containing compound metabolism; heme O biosynthesis; heme O from protoheme: step 1/1. Functionally, converts heme B (protoheme IX) to heme O by substitution of the vinyl group on carbon 2 of heme B porphyrin ring with a hydroxyethyl farnesyl side group. The protein is Protoheme IX farnesyltransferase of Mycolicibacterium gilvum (strain PYR-GCK) (Mycobacterium gilvum (strain PYR-GCK)).